The chain runs to 607 residues: Glutamyl-tRNA(Gln) amidotransferase subunit E (607 aa).

Belongs to the GatB/GatE family. GatE subfamily. Heterodimer of GatD and GatE.

It catalyses the reaction L-glutamyl-tRNA(Gln) + L-glutamine + ATP + H2O = L-glutaminyl-tRNA(Gln) + L-glutamate + ADP + phosphate + H(+). In terms of biological role, allows the formation of correctly charged Gln-tRNA(Gln) through the transamidation of misacylated Glu-tRNA(Gln) in organisms which lack glutaminyl-tRNA synthetase. The reaction takes place in the presence of glutamine and ATP through an activated gamma-phospho-Glu-tRNA(Gln). The GatDE system is specific for glutamate and does not act on aspartate. The protein is Glutamyl-tRNA(Gln) amidotransferase subunit E of Pyrobaculum islandicum (strain DSM 4184 / JCM 9189 / GEO3).